Consider the following 360-residue polypeptide: Peptide chain release factor 1 (360 aa).

Q235 is modified (N5-methylglutamine).

Belongs to the prokaryotic/mitochondrial release factor family. Post-translationally, methylated by PrmC. Methylation increases the termination efficiency of RF1.

It localises to the cytoplasm. Functionally, peptide chain release factor 1 directs the termination of translation in response to the peptide chain termination codons UAG and UAA. The polypeptide is Peptide chain release factor 1 (Cupriavidus taiwanensis (strain DSM 17343 / BCRC 17206 / CCUG 44338 / CIP 107171 / LMG 19424 / R1) (Ralstonia taiwanensis (strain LMG 19424))).